A 205-amino-acid polypeptide reads, in one-letter code: Histone H1, early embryonic (205 aa).

Disordered stretches follow at residues 1 to 21 and 94 to 205; these read MAEK…HPPA and AKAQ…AKSK. The 75-residue stretch at 17 to 91 folds into the H15 domain; sequence AHPPAAEMVA…GASGSFKVNV (75 aa). Over residues 98-124 the composition is skewed to basic and acidic residues; sequence ASEKAKKEKEKAKLLAQREKAKEKGCS. Basic residues-rich tracts occupy residues 135-150 and 157-205; these read PKKV…KPVK and EKKK…AKSK.

This sequence belongs to the histone H1/H5 family.

It localises to the nucleus. It is found in the chromosome. Its function is as follows. Histones H1 are necessary for the condensation of nucleosome chains into higher-order structures. In Strongylocentrotus purpuratus (Purple sea urchin), this protein is Histone H1, early embryonic.